The sequence spans 64 residues: SPbeta prophage-derived uncharacterized protein YoqI (64 aa).

The chain is SPbeta prophage-derived uncharacterized protein YoqI (yoqI) from Bacillus subtilis (strain 168).